We begin with the raw amino-acid sequence, 378 residues long: Erythronate-4-phosphate dehydrogenase (378 aa).

Substrate is bound by residues Ser45 and Thr66. NAD(+)-binding residues include Asp146 and Thr175. Arg208 is an active-site residue. Asp232 is an NAD(+) binding site. Residue Glu237 is part of the active site. Residue His254 is the Proton donor of the active site. Position 257 (Gly257) interacts with NAD(+). Tyr258 is a binding site for substrate.

Belongs to the D-isomer specific 2-hydroxyacid dehydrogenase family. PdxB subfamily. As to quaternary structure, homodimer.

It is found in the cytoplasm. The catalysed reaction is 4-phospho-D-erythronate + NAD(+) = (R)-3-hydroxy-2-oxo-4-phosphooxybutanoate + NADH + H(+). Its pathway is cofactor biosynthesis; pyridoxine 5'-phosphate biosynthesis; pyridoxine 5'-phosphate from D-erythrose 4-phosphate: step 2/5. Functionally, catalyzes the oxidation of erythronate-4-phosphate to 3-hydroxy-2-oxo-4-phosphonooxybutanoate. The polypeptide is Erythronate-4-phosphate dehydrogenase (Salmonella dublin (strain CT_02021853)).